The primary structure comprises 334 residues: TPR repeat-containing protein MJ0798 (334 aa).

7 TPR repeats span residues 102-135 (WKLW…NQNT), 137-168 (LLCK…DRNN), 169-202 (YKAL…NPND), 204-235 (EALE…KPDD), 236-269 (IDLI…NPNV), 273-306 (EQIY…NLYH), and 308-333 (EIYE…YKKL).

The protein is TPR repeat-containing protein MJ0798 of Methanocaldococcus jannaschii (strain ATCC 43067 / DSM 2661 / JAL-1 / JCM 10045 / NBRC 100440) (Methanococcus jannaschii).